A 93-amino-acid chain; its full sequence is Putative regulatory protein Fnod_1678 (93 aa).

This sequence belongs to the RemA family.

This chain is Putative regulatory protein Fnod_1678, found in Fervidobacterium nodosum (strain ATCC 35602 / DSM 5306 / Rt17-B1).